A 168-amino-acid polypeptide reads, in one-letter code: Ribosome maturation factor RimM (168 aa).

The 73-residue stretch at Glu96 to Leu168 folds into the PRC barrel domain.

Belongs to the RimM family. Binds ribosomal protein uS19.

The protein localises to the cytoplasm. Functionally, an accessory protein needed during the final step in the assembly of 30S ribosomal subunit, possibly for assembly of the head region. Essential for efficient processing of 16S rRNA. May be needed both before and after RbfA during the maturation of 16S rRNA. It has affinity for free ribosomal 30S subunits but not for 70S ribosomes. This chain is Ribosome maturation factor RimM, found in Caldanaerobacter subterraneus subsp. tengcongensis (strain DSM 15242 / JCM 11007 / NBRC 100824 / MB4) (Thermoanaerobacter tengcongensis).